Consider the following 233-residue polypeptide: Uracil-DNA glycosylase (233 aa).

Asp70 functions as the Proton acceptor in the catalytic mechanism.

It belongs to the uracil-DNA glycosylase (UDG) superfamily. UNG family.

Its subcellular location is the cytoplasm. It catalyses the reaction Hydrolyzes single-stranded DNA or mismatched double-stranded DNA and polynucleotides, releasing free uracil.. In terms of biological role, excises uracil residues from the DNA which can arise as a result of misincorporation of dUMP residues by DNA polymerase or due to deamination of cytosine. This chain is Uracil-DNA glycosylase, found in Helicobacter pylori (strain P12).